The chain runs to 979 residues: MHC class II regulatory factor RFX1 (979 aa).

Disordered stretches follow at residues 1-136, 181-227, and 370-405; these read MATQ…QVVQ, QSAA…PTGT, and TSTG…STGG. A compositionally biased stretch (pro residues) spans 12-44; the sequence is APPPSQPPQAPPQAQPQPPPPPPPAAPQPPQPP. Low complexity predominate over residues 45–73; the sequence is TAAATPQPQYVTELQSPQPQAQPPGGQKQ. Phosphoserine is present on S60. Pro residues predominate over residues 81 to 96; the sequence is VPAPSQPTGAPTPSPA. Over residues 114–126 the composition is skewed to polar residues; it reads ETVSEASPGSTAS. Over residues 127–136 the composition is skewed to low complexity; sequence QTGVPTQVVQ. Polar residues-rich tracts occupy residues 190–203 and 209–220; these read GQVS…QQVH and SPVQANSSSSKT. Positions 370-379 are enriched in low complexity; the sequence is TSTGAGASNS. The span at 380 to 405 shows a compositional bias: gly residues; the sequence is SGGGGSGGGGGGGGGGGGGGSGSTGG. Residues 438 to 513 constitute a DNA-binding region (RFX-type winged-helix); that stretch reads TVQWLLDNYE…YHYYGLRIKA (76 aa). Residues 744–979 are necessary for dimerization; sequence FAQTLRRYTS…GLFVQALPSS (236 aa). The segment at 915-960 is disordered; it reads SLNPLDPDKDEEEEEEEESEDELPQDISLAAGGESPALGPETLEPP. Residues 922-938 show a composition bias toward acidic residues; that stretch reads DKDEEEEEEEESEDELP. 2 positions are modified to phosphoserine: S978 and S979.

This sequence belongs to the RFX family. In terms of assembly, homodimer; binds DNA as a homodimer. Heterodimer; heterodimerizes with RFX2 and RFX3.

The protein resides in the nucleus. Its function is as follows. Regulatory factor essential for MHC class II genes expression. Binds to the X boxes of MHC class II genes. Also binds to an inverted repeat (ENH1) required for hepatitis B virus genes expression and to the most upstream element (alpha) of the RPL30 promoter. In Homo sapiens (Human), this protein is MHC class II regulatory factor RFX1 (RFX1).